A 433-amino-acid polypeptide reads, in one-letter code: Chaperone SurA (433 aa).

Positions 1–20 (MKNWRTLIFGLMFSVSTAFA) are cleaved as a signal peptide. PpiC domains follow at residues 171–272 (DTEL…KVND) and 282–382 (VTEV…QLLD).

The protein resides in the periplasm. It carries out the reaction [protein]-peptidylproline (omega=180) = [protein]-peptidylproline (omega=0). In terms of biological role, chaperone involved in the correct folding and assembly of outer membrane proteins. Recognizes specific patterns of aromatic residues and the orientation of their side chains, which are found more frequently in integral outer membrane proteins. May act in both early periplasmic and late outer membrane-associated steps of protein maturation. The polypeptide is Chaperone SurA (Photorhabdus laumondii subsp. laumondii (strain DSM 15139 / CIP 105565 / TT01) (Photorhabdus luminescens subsp. laumondii)).